We begin with the raw amino-acid sequence, 260 residues long: MAEEEDYMSDSFINVQEDIRPGLPMLRQIREARRKEEKRQEANLKNRQKSIKEEEQERRDMGLKNALGCENKGFALLQKMGYKSGQALGKSGDGIVEPIPLNVKTGKSGIGHETLLKRKAEEKLESYRRKIHMKSQAEERAAEQFRIRLKNKQDEMKLEGDLRRSQRACQQLDTQKNIQVPREAWYWLRPEEETEEETEEEKEQDEDEYKSEDLSVLEKLQILTSYLREEHLYCIWCGTAYEDKEDLSSNCPGPTSADHD.

The stretch at 25 to 61 (MLRQIREARRKEEKRQEANLKNRQKSIKEEEQERRDM) forms a coiled coil. The disordered stretch occupies residues 33–60 (RRKEEKRQEANLKNRQKSIKEEEQERRD). Residues 69–115 (CENKGFALLQKMGYKSGQALGKSGDGIVEPIPLNVKTGKSGIGHETL) form the G-patch domain. Lys-123 carries the N6-acetyllysine modification. The tract at residues 187-212 (WLRPEEETEEETEEEKEQDEDEYKSE) is disordered. Positions 192–210 (EETEEETEEEKEQDEDEYK) are enriched in acidic residues.

It belongs to the GPATCH11 family.

Its subcellular location is the chromosome. The protein resides in the centromere. It is found in the kinetochore. In Bos taurus (Bovine), this protein is G patch domain-containing protein 11 (GPATCH11).